The sequence spans 629 residues: 1-deoxy-D-xylulose-5-phosphate synthase (629 aa).

Residues histidine 78 and 119-121 contribute to the thiamine diphosphate site; that span reads AHS. Aspartate 150 is a Mg(2+) binding site. Residues 151–152, asparagine 179, tyrosine 286, and glutamate 368 contribute to the thiamine diphosphate site; that span reads GA. Mg(2+) is bound at residue asparagine 179.

This sequence belongs to the transketolase family. DXPS subfamily. In terms of assembly, homodimer. Mg(2+) is required as a cofactor. Requires thiamine diphosphate as cofactor.

It carries out the reaction D-glyceraldehyde 3-phosphate + pyruvate + H(+) = 1-deoxy-D-xylulose 5-phosphate + CO2. It functions in the pathway metabolic intermediate biosynthesis; 1-deoxy-D-xylulose 5-phosphate biosynthesis; 1-deoxy-D-xylulose 5-phosphate from D-glyceraldehyde 3-phosphate and pyruvate: step 1/1. Functionally, catalyzes the acyloin condensation reaction between C atoms 2 and 3 of pyruvate and glyceraldehyde 3-phosphate to yield 1-deoxy-D-xylulose-5-phosphate (DXP). This is 1-deoxy-D-xylulose-5-phosphate synthase from Acidovorax sp. (strain JS42).